Consider the following 356-residue polypeptide: MSTVTITDLARENVRNLTPYQSARRLGGNGDVWLNANEYPTAVEFQLTQQTLNRYPECQPKAVIENYAQYAGVKPEQVLVSRGADEGIELLIRAFCEPGKDAILYCPPTYGMYSVSAETIGVECRTVPTLENWQLDLQGISDKLDGVKVVYVCSPNNPTGQLINPQDFRTLLELTRGKAIVVADEAYIEFCPQASLAGWLAEYPHLAILRTLSKAFALAGLRCGFTLANEEVINLLMKVIAPYPLSTPVADIAAQALSPQGIVAMRERVAQIIAEREYLIAALKEIPCVEQVFDSETNYILARFKASSAVFKSLWDQGIILRDQNKQPSLSGCLRITVGTREESQRVIDALRAEQV.

An N6-(pyridoxal phosphate)lysine modification is found at Lys214.

It belongs to the class-II pyridoxal-phosphate-dependent aminotransferase family. Histidinol-phosphate aminotransferase subfamily. As to quaternary structure, homodimer. The cofactor is pyridoxal 5'-phosphate.

It carries out the reaction L-histidinol phosphate + 2-oxoglutarate = 3-(imidazol-4-yl)-2-oxopropyl phosphate + L-glutamate. It participates in amino-acid biosynthesis; L-histidine biosynthesis; L-histidine from 5-phospho-alpha-D-ribose 1-diphosphate: step 7/9. This is Histidinol-phosphate aminotransferase from Escherichia coli (strain 55989 / EAEC).